Consider the following 132-residue polypeptide: Small ribosomal subunit protein eS24 (132 aa).

A compositionally biased stretch (basic and acidic residues) spans 92-101; sequence LARHGLYEKK. A disordered region spans residues 92 to 132; that stretch reads LARHGLYEKKRPTRKQRKERKNRMKKVRGTKKSKVGAAAKK. Residues 102 to 132 are compositionally biased toward basic residues; that stretch reads RPTRKQRKERKNRMKKVRGTKKSKVGAAAKK.

The protein belongs to the eukaryotic ribosomal protein eS24 family.

This chain is Small ribosomal subunit protein eS24 (RpS24), found in Spodoptera frugiperda (Fall armyworm).